A 274-amino-acid polypeptide reads, in one-letter code: Lectin-like protein (274 aa).

The N-terminal stretch at 1–19 (MKIHKLCFLALLLAHTTSA) is a signal peptide. The interval 28 to 268 (TSELVFLGDA…RHDIWSWTFQ (241 aa)) is legume-lectin like. The disordered stretch occupies residues 62–81 (SHGQSLWSTPVPFKPSSNSS). A glycan (N-linked (GlcNAc...) asparagine) is linked at N129. S238 is modified (phosphoserine).

It belongs to the leguminous lectin family. Expressed in seedlings and leaves of adult plants.

The protein localises to the secreted. It is found in the extracellular space. The protein resides in the apoplast. Its subcellular location is the cell membrane. Its function is as follows. Plays a positive role in the effector-triggered immunity (ETI) response. Involved in salicylic acid (SA)-mediated processes occurring in ETI response, but is not involved in the autophagy process. Promotes systemic rather than local immunity. Essential for systemic acquired resistance (SAR), but not necessary for immune signaling downstream of SA. May act in parallel with SA. The chain is Lectin-like protein from Arabidopsis thaliana (Mouse-ear cress).